The sequence spans 161 residues: Large ribosomal subunit protein uL15 (161 aa).

Positions 1 to 43 (MKLSEIADNVGSRKKRMRIGRGIGSGKGKTGGRGGKGQTARSG) are disordered. Residues 21–37 (RGIGSGKGKTGGRGGKG) are compositionally biased toward gly residues.

As to quaternary structure, part of the 50S ribosomal subunit.

Its function is as follows. Binds to the 23S rRNA. This is Large ribosomal subunit protein uL15 from Rhodopseudomonas palustris (strain ATCC BAA-98 / CGA009).